An 84-amino-acid polypeptide reads, in one-letter code: Cytochrome b559 subunit alpha (84 aa).

The helical transmembrane segment at 24-38 (IIHAVTLPAIFIAGF) threads the bilayer. H26 serves as a coordination point for heme.

The protein belongs to the PsbE/PsbF family. Heterodimer of an alpha subunit and a beta subunit. PSII is composed of 1 copy each of membrane proteins PsbA, PsbB, PsbC, PsbD, PsbE, PsbF, PsbH, PsbI, PsbJ, PsbK, PsbL, PsbM, PsbT, PsbX, PsbY, Psb30/Ycf12, peripheral proteins PsbO, CyanoQ (PsbQ), PsbU, PsbV and a large number of cofactors. It forms dimeric complexes. Heme b is required as a cofactor.

It localises to the cellular thylakoid membrane. This b-type cytochrome is tightly associated with the reaction center of photosystem II (PSII). PSII is a light-driven water:plastoquinone oxidoreductase that uses light energy to abstract electrons from H(2)O, generating O(2) and a proton gradient subsequently used for ATP formation. It consists of a core antenna complex that captures photons, and an electron transfer chain that converts photonic excitation into a charge separation. This chain is Cytochrome b559 subunit alpha, found in Prochlorococcus marinus subsp. pastoris (strain CCMP1986 / NIES-2087 / MED4).